Here is a 156-residue protein sequence, read N- to C-terminus: Cell division protein SepF (156 aa).

Residues 20–36 show a composition bias toward basic and acidic residues; that stretch reads AQYGYEKEQTDMKKQQD. Residues 20–50 form a disordered region; sequence AQYGYEKEQTDMKKQQDPPEQQDVTFPKAQP.

The protein belongs to the SepF family. In terms of assembly, homodimer. Interacts with FtsZ.

The protein resides in the cytoplasm. Its function is as follows. Cell division protein that is part of the divisome complex and is recruited early to the Z-ring. Probably stimulates Z-ring formation, perhaps through the cross-linking of FtsZ protofilaments. Its function overlaps with FtsA. The chain is Cell division protein SepF from Bacillus cereus (strain G9842).